A 3419-amino-acid polypeptide reads, in one-letter code: Utrophin (3419 aa).

Positions 1-246 (MAKYGHLEAS…LPDKKSIIMY (246 aa)) are actin-binding. A Phosphotyrosine modification is found at Y4. S10 bears the Phosphoserine mark. 2 Calponin-homology (CH) domains span residues 31-135 (DVQK…LHWQ) and 150-255 (TNSE…EVLP). Residues 268 to 905 (TLPRKYKKEC…YQQQLENELK (638 aa)) form an interaction with SYNM region. S295 is subject to Phosphoserine. 17 Spectrin repeats span residues 312-416 (DSYQ…SRLH), 421-525 (ELQK…NRLQ), 532-636 (QELL…NQVT), 690-795 (KKFD…RKIQ), 801-901 (NAYF…QQLE), 910-1012 (PAYL…RSLE), 1019-1121 (RDFK…SRLS), 1128-1229 (MNLK…HTLE), 1236-1333 (VELL…ISLE), 1335-1436 (QLQV…LFQK), 1438-1540 (ANFE…QDLE), 1547-1648 (RKLK…NTLL), 1653-1747 (QLEV…INSA), 1748-1840 (QMLI…KIKA), 1841-1958 (IPQR…SDRR), 1969-2070 (KQFH…PRLK), and 2077-2176 (SGYR…KTRT). Residues 1336–1761 (LQVLRETDHM…GQDPAGTVEA (426 aa)) are interaction with SYNM. Phosphoserine is present on S1998. S2201 carries the phosphoserine modification. Spectrin repeat units follow at residues 2216–2319 (ADLD…QQLE), 2336–2426 (EELM…SALE), 2433–2542 (QTSR…AHLE), 2549–2674 (NRLL…KQVG), and 2681–2783 (RDLQ…KQLQ). Residues 2616-2640 (DQPIEAPEEPRRNPQSKTELTPEER) are disordered. The tract at residues 2785–3152 (AHRDFGPSSQ…TVLEGDNLET (368 aa)) is interaction with SYNM. One can recognise a WW domain in the interval 2799–2832 (TSVQLPWQRSISHNKVPYYINHQTQTTCWDHPKM). The ZZ-type; degenerate zinc-finger motif lies at 3052 to 3108 (KHQAKCNICKECPIVGFRYRSLKHFNYDVCQSCFFSGRTAKGHKLHYPMVEYCIPTT). 4 residues coordinate Zn(2+): C3057, C3060, C3081, and C3084. Disordered regions lie at residues 3277 to 3296 (RRGLPLGSPPDSIVSPYHTS) and 3344 to 3395 (DSDS…TDLT). Position 3284 is a phosphoserine (S3284).

Homodimer. Interacts with the syntrophins SNTA1; SNTB1 and SNTB2. Interacts with SYNM. Interacts (via its WWW and ZZ domains) with DAG1 (via the PPXY motif of betaDAG1); the interaction is inhibited by the tyrosine phosphorylation of the PPXY motif of DAG1. Interacts with DTNB. Interacts with PGM5.

The protein resides in the postsynaptic cell membrane. It localises to the cytoplasm. Its subcellular location is the cytoskeleton. May play a role in anchoring the cytoskeleton to the plasma membrane. In Rattus norvegicus (Rat), this protein is Utrophin.